The chain runs to 344 residues: Ketol-acid reductoisomerase (NADP(+)) (344 aa).

One can recognise a KARI N-terminal Rossmann domain in the interval 2-181 (EKIYYDADIS…GAGRAGILTT (180 aa)). NADP(+) contacts are provided by residues 25–28 (YGSQ), Arg48, Ser52, and 82–85 (DERQ). His107 is an active-site residue. Residue Gly133 participates in NADP(+) binding. Residues 182-327 (TFREETETDL…RKLRSMMPFI (146 aa)) form the KARI C-terminal knotted domain. Asp190, Glu194, Glu226, and Glu230 together coordinate Mg(2+). A substrate-binding site is contributed by Ser251.

It belongs to the ketol-acid reductoisomerase family. The cofactor is Mg(2+).

The enzyme catalyses (2R)-2,3-dihydroxy-3-methylbutanoate + NADP(+) = (2S)-2-acetolactate + NADPH + H(+). It carries out the reaction (2R,3R)-2,3-dihydroxy-3-methylpentanoate + NADP(+) = (S)-2-ethyl-2-hydroxy-3-oxobutanoate + NADPH + H(+). The protein operates within amino-acid biosynthesis; L-isoleucine biosynthesis; L-isoleucine from 2-oxobutanoate: step 2/4. It participates in amino-acid biosynthesis; L-valine biosynthesis; L-valine from pyruvate: step 2/4. Functionally, involved in the biosynthesis of branched-chain amino acids (BCAA). Catalyzes an alkyl-migration followed by a ketol-acid reduction of (S)-2-acetolactate (S2AL) to yield (R)-2,3-dihydroxy-isovalerate. In the isomerase reaction, S2AL is rearranged via a Mg-dependent methyl migration to produce 3-hydroxy-3-methyl-2-ketobutyrate (HMKB). In the reductase reaction, this 2-ketoacid undergoes a metal-dependent reduction by NADPH to yield (R)-2,3-dihydroxy-isovalerate. The sequence is that of Ketol-acid reductoisomerase (NADP(+)) from Alicyclobacillus acidocaldarius subsp. acidocaldarius (strain ATCC 27009 / DSM 446 / BCRC 14685 / JCM 5260 / KCTC 1825 / NBRC 15652 / NCIMB 11725 / NRRL B-14509 / 104-IA) (Bacillus acidocaldarius).